We begin with the raw amino-acid sequence, 299 residues long: Nucleotide-binding protein RER_30260 (299 aa).

19 to 26 serves as a coordination point for ATP; sequence GLSGAGLS. Residue 70 to 73 participates in GTP binding; the sequence is DVRS.

Belongs to the RapZ-like family.

Displays ATPase and GTPase activities. This Rhodococcus erythropolis (strain PR4 / NBRC 100887) protein is Nucleotide-binding protein RER_30260.